We begin with the raw amino-acid sequence, 373 residues long: AA9 family lytic polysaccharide monooxygenase A (373 aa).

Positions M1 to A20 are cleaved as a signal peptide. H21 serves as a coordination point for Cu(2+). Residues E36 to D55 form a disordered region. Cysteines 63 and 183 form a disulfide. Residue H102 participates in Cu(2+) binding. 2 residues coordinate O2: H169 and Q178. Residue Y180 coordinates Cu(2+). Residues G234–A333 are disordered. Composition is skewed to low complexity over residues A235–S262 and P270–T323. Positions N324–A333 are enriched in polar residues. A CBM1 domain is found at G335–V371. N-linked (GlcNAc...) asparagine glycosylation is present at N347.

It belongs to the polysaccharide monooxygenase AA9 family. Requires Cu(2+) as cofactor.

The protein localises to the secreted. The enzyme catalyses [(1-&gt;4)-beta-D-glucosyl]n+m + reduced acceptor + O2 = 4-dehydro-beta-D-glucosyl-[(1-&gt;4)-beta-D-glucosyl]n-1 + [(1-&gt;4)-beta-D-glucosyl]m + acceptor + H2O.. Its function is as follows. Lytic polysaccharide monooxygenase (LPMO) that depolymerizes crystalline and amorphous polysaccharides via the oxidation of scissile alpha- or beta-(1-4)-glycosidic bonds, yielding exclusively C4 oxidation products. Catalysis by LPMOs requires the reduction of the active-site copper from Cu(II) to Cu(I) by a reducing agent and H(2)O(2) or O(2) as a cosubstrate. In addition to cellulose, also cleaves the beta-(1!4)-glucan backbone of tamarind xyloglucan, but only next to unsubstituted glucosyl units. The polypeptide is AA9 family lytic polysaccharide monooxygenase A (Aspergillus tamarii).